A 248-amino-acid chain; its full sequence is Carboxy-S-adenosyl-L-methionine synthase (248 aa).

S-adenosyl-L-methionine contacts are provided by residues Tyr-40, 65 to 67, 95 to 96, 123 to 124, Asn-138, and Arg-205; these read GCS, DN, and DI.

Belongs to the class I-like SAM-binding methyltransferase superfamily. Cx-SAM synthase family. Homodimer.

It catalyses the reaction prephenate + S-adenosyl-L-methionine = carboxy-S-adenosyl-L-methionine + 3-phenylpyruvate + H2O. Functionally, catalyzes the conversion of S-adenosyl-L-methionine (SAM) to carboxy-S-adenosyl-L-methionine (Cx-SAM). In Hahella chejuensis (strain KCTC 2396), this protein is Carboxy-S-adenosyl-L-methionine synthase.